The chain runs to 385 residues: Tumor protein p53-inducible protein 13 (385 aa).

Positions M1 to A27 are cleaved as a signal peptide. Topologically, residues E28–E301 are extracellular. A disordered region spans residues A242 to P297. Residues P281–P297 show a composition bias toward low complexity. A helical membrane pass occupies residues A302–C322. The Cytoplasmic portion of the chain corresponds to T323–D385. Positions S359 to P369 are enriched in basic residues. Residues S359–D385 are disordered.

The protein resides in the cell membrane. The protein localises to the cytoplasm. Functionally, may act as a tumor suppressor. Inhibits tumor cell growth, when overexpressed. The protein is Tumor protein p53-inducible protein 13 (Tp53i13) of Mus musculus (Mouse).